Reading from the N-terminus, the 194-residue chain is Probable chorismate pyruvate-lyase (194 aa).

Arg-77, Leu-115, and Glu-176 together coordinate substrate.

This sequence belongs to the UbiC family.

The protein resides in the cytoplasm. It catalyses the reaction chorismate = 4-hydroxybenzoate + pyruvate. It functions in the pathway cofactor biosynthesis; ubiquinone biosynthesis. In terms of biological role, removes the pyruvyl group from chorismate, with concomitant aromatization of the ring, to provide 4-hydroxybenzoate (4HB) for the ubiquinone pathway. The polypeptide is Probable chorismate pyruvate-lyase (Cupriavidus pinatubonensis (strain JMP 134 / LMG 1197) (Cupriavidus necator (strain JMP 134))).